Reading from the N-terminus, the 85-residue chain is CRISPR-associated endoribonuclease Cas2 (85 aa).

D8 is a Mg(2+) binding site.

Belongs to the CRISPR-associated endoribonuclease Cas2 protein family. Homodimer, forms a heterotetramer with a Cas1 homodimer. It depends on Mg(2+) as a cofactor.

In terms of biological role, CRISPR (clustered regularly interspaced short palindromic repeat), is an adaptive immune system that provides protection against mobile genetic elements (viruses, transposable elements and conjugative plasmids). CRISPR clusters contain sequences complementary to antecedent mobile elements and target invading nucleic acids. CRISPR clusters are transcribed and processed into CRISPR RNA (crRNA). Functions as a ssRNA-specific endoribonuclease. Involved in the integration of spacer DNA into the CRISPR cassette. This is CRISPR-associated endoribonuclease Cas2 from Pyrococcus furiosus (strain ATCC 43587 / DSM 3638 / JCM 8422 / Vc1).